A 370-amino-acid chain; its full sequence is L-lactate oxidase (370 aa).

The region spanning 8-367 (DPDGMPVTLS…TPDLLTGFSG (360 aa)) is the FMN hydroxy acid dehydrogenase domain. Y34 is a pyruvate binding site. Residues 87–89 (PMA), S116, and Q136 each bind FMN. Y138 contacts pyruvate. Residue T164 coordinates FMN. Pyruvate is bound at residue R173. K238 and S260 together coordinate FMN. 2 residues coordinate pyruvate: H262 and R265. Residue H262 is the Proton acceptor of the active site. FMN-binding positions include 293–297 (DGGIR) and R317.

It belongs to the FMN-dependent alpha-hydroxy acid dehydrogenase family. Homotetramer. FMN serves as cofactor.

The enzyme catalyses (S)-lactate + O2 = pyruvate + H2O2. It carries out the reaction a (2S)-2-hydroxycarboxylate + O2 = a 2-oxocarboxylate + H2O2. The catalysed reaction is glycolate + O2 = glyoxylate + H2O2. It catalyses the reaction 2-hydroxyoctadecanoate + O2 = 2-oxooctadecanoate + H2O2. Its function is as follows. Catalyzes the oxidation of (S)-lactate (L-lactate) to pyruvate, with a reduction of O2 to H2O2. Is also able to use glycolate and to a lesser extent 2-hydroxyoctadecanoate as substrate. The chain is L-lactate oxidase from Roseobacter sp. (strain GAI101).